The chain runs to 353 residues: WD repeat-containing protein 55 (353 aa).

WD repeat units lie at residues 4 to 43 (DLGA…SLVR), 49 to 88 (AHKE…QVAH), 92 to 130 (AHED…CSHE), 133 to 172 (AHED…VQSQ), 175 to 214 (FSED…DCSD), 218 to 257 (DLAP…IIQP), and 260 to 299 (SHDY…EGSN). The interval 300–353 (VNSGNASGAAEDSDSDNDGMDLDNDPSKSSKGSKRKTKSKANTLNATNNFFADL) is disordered. Residues 310–323 (EDSDSDNDGMDLDN) show a composition bias toward acidic residues. Low complexity predominate over residues 339–353 (KANTLNATNNFFADL).

Belongs to the WD repeat WDR55 family. As to quaternary structure, interacts with DDB1A. In terms of tissue distribution, highly expressed in roots. Expressed in cotyledons, leaves, buds and flowers.

It is found in the nucleus. It localises to the cytoplasm. In terms of biological role, required for male and female gametogenesis, seed development, and embryo and endosperm development at early stages. Involved in the establishment of bilateral symmetry in the transition from the globular to the heart embryo stage. May act in the frame of a CRL4 complex. Required for proper vegetative growth and organization of the adult plant body. May play a role in hormonal control of plant development. This is WD repeat-containing protein 55 from Arabidopsis thaliana (Mouse-ear cress).